A 329-amino-acid polypeptide reads, in one-letter code: Probable carboxylesterase 13 (329 aa).

Met-1 is modified (N-acetylmethionine). Positions 81-83 (HGG) match the Involved in the stabilization of the negatively charged intermediate by the formation of the oxyanion hole motif. Catalysis depends on residues Ser-165, Asp-269, and His-302.

It belongs to the 'GDXG' lipolytic enzyme family. Expressed in flowers.

It catalyses the reaction a carboxylic ester + H2O = an alcohol + a carboxylate + H(+). Carboxylesterase acting on esters with varying acyl chain length. In Arabidopsis thaliana (Mouse-ear cress), this protein is Probable carboxylesterase 13 (CXE13).